Reading from the N-terminus, the 327-residue chain is uncharacterized protein (327 aa).

The region spanning 12–79 (KRIDEFLAKE…LKKELDLEIE (68 aa)) is the S4 RNA-binding domain. Asp136 is an active-site residue.

This sequence belongs to the pseudouridine synthase RluA family.

It catalyses the reaction a uridine in RNA = a pseudouridine in RNA. This is an uncharacterized protein from Helicobacter pylori (strain J99 / ATCC 700824) (Campylobacter pylori J99).